The chain runs to 103 residues: Pyrimidine/purine nucleoside phosphorylase (103 aa).

This sequence belongs to the nucleoside phosphorylase PpnP family.

The catalysed reaction is a purine D-ribonucleoside + phosphate = a purine nucleobase + alpha-D-ribose 1-phosphate. The enzyme catalyses adenosine + phosphate = alpha-D-ribose 1-phosphate + adenine. It catalyses the reaction cytidine + phosphate = cytosine + alpha-D-ribose 1-phosphate. It carries out the reaction guanosine + phosphate = alpha-D-ribose 1-phosphate + guanine. The catalysed reaction is inosine + phosphate = alpha-D-ribose 1-phosphate + hypoxanthine. The enzyme catalyses thymidine + phosphate = 2-deoxy-alpha-D-ribose 1-phosphate + thymine. It catalyses the reaction uridine + phosphate = alpha-D-ribose 1-phosphate + uracil. It carries out the reaction xanthosine + phosphate = alpha-D-ribose 1-phosphate + xanthine. In terms of biological role, catalyzes the phosphorolysis of diverse nucleosides, yielding D-ribose 1-phosphate and the respective free bases. Can use uridine, adenosine, guanosine, cytidine, thymidine, inosine and xanthosine as substrates. Also catalyzes the reverse reactions. The polypeptide is Pyrimidine/purine nucleoside phosphorylase (Shewanella baltica (strain OS155 / ATCC BAA-1091)).